Reading from the N-terminus, the 631-residue chain is MSKSHAAYIDYALRRTTNMPVEMMGSDVVRLKDYQHFVARVFLGLDSMHSLLLFHETGVGKTMTTVYILKHLKDIYTNWAIILLVKKALIEDPWMNTILRYAPEITKDCIFINYDDQNFRNKFFTNIKTINSKSRICVIIDECHNFISKSLIKEDGKIRPTRSVYNFLSKTIALKNHKMICLSATPIVNSVQEFTMLVNLLRPGSLQHQSLFENKRLVDEKELVSKLGGLCSYIVNNEFSIFDDVEGSASFAKKTVLMRYVNMSKKQEEIYQKAKLAEIKTGISSFRILRRMATTFTFDSFPERQNRDPGEYAQEIATLYNDFKNSLRNREFSKSALDTFKKGELLKGDASAADISLFTELKEKSVKFIDVCLGILASHGKCLVFEPFVNQSGIEILLLYFKVFGISNIEFSSRTKDTRIKAVAEFNQESNTNGECIKTCVFSSSGGEGISFFSINDIFILDMTWNEASLRQIVGRAIRLNSHVLTPPERRYVNVHFIMARLSNGMPTVDEDLFEIIQSKSKEFVQLFRVFKHTSLEWIHANEKDFSPIDNESGWKTLVSRAIDLSSKKNITNKLIEGTNIWYSNSNRLMSINRGFKGVDGRVYDVDGNYLHDMPDNPVIKIHDGKLIYIF.

The region spanning 42 to 204 (FLGLDSMHSL…TMLVNLLRPG (163 aa)) is the Helicase ATP-binding domain. 55–62 (HETGVGKT) contacts ATP. The short motif at 141–144 (DECH) is the DEXH box element. The Helicase C-terminal domain occupies 367–532 (KFIDVCLGIL…EFVQLFRVFK (166 aa)). The binding to the cap-specific mRNA (nucleoside-2'-O-)-methyltransferase stretch occupies residues 457-524 (DIFILDMTWN…EIIQSKSKEF (68 aa)).

This sequence belongs to the helicase family. NPH I subfamily. In terms of assembly, monomer. Interacts (via C-terminus) with RAP94/OPG109 (via N-terminus). Interacts with the cap-specific mRNA (nucleoside-2'-O-)-methyltransferase OPG102.

It localises to the virion. It carries out the reaction a ribonucleoside 5'-triphosphate + H2O = a ribonucleoside 5'-diphosphate + phosphate + H(+). DNA-dependent ATPase that acts as a 5' to 3' translocase on single-stranded DNA and thereby plays a role in transcription termination of viral early genes. Uses forward translocation in concert with the viral RNA polymerase RAP94/OPG109 subunit and the capping enzyme/VTF to catalyze release of UUUUUNU-containing nascent RNA from the elongation complex. In addition, acts as a positive elongation factor to assist transcription through problematic sequences. The sequence is that of Nucleoside triphosphatase I (OPG123) from Vaccinia virus (strain Copenhagen) (VACV).